The sequence spans 362 residues: 3-dehydroquinate synthase (362 aa).

Residues 71 to 76 (DGEQNK), 105 to 109 (GVIGD), 129 to 130 (TT), K142, and K151 contribute to the NAD(+) site. Zn(2+) is bound by residues E184, H247, and H264.

The protein belongs to the sugar phosphate cyclases superfamily. Dehydroquinate synthase family. The cofactor is Co(2+). Zn(2+) serves as cofactor. Requires NAD(+) as cofactor.

The protein localises to the cytoplasm. It carries out the reaction 7-phospho-2-dehydro-3-deoxy-D-arabino-heptonate = 3-dehydroquinate + phosphate. Its pathway is metabolic intermediate biosynthesis; chorismate biosynthesis; chorismate from D-erythrose 4-phosphate and phosphoenolpyruvate: step 2/7. In terms of biological role, catalyzes the conversion of 3-deoxy-D-arabino-heptulosonate 7-phosphate (DAHP) to dehydroquinate (DHQ). The chain is 3-dehydroquinate synthase from Blochmanniella pennsylvanica (strain BPEN).